The following is a 248-amino-acid chain: 2,3-bisphosphoglycerate-dependent phosphoglycerate mutase (248 aa).

Substrate contacts are provided by residues 8-15 (RHGESEWN), 21-22 (TG), Arg-60, 87-90 (ERHY), Lys-98, 114-115 (RR), and 183-184 (GN). His-9 serves as the catalytic Tele-phosphohistidine intermediate. Catalysis depends on Glu-87, which acts as the Proton donor/acceptor.

Belongs to the phosphoglycerate mutase family. BPG-dependent PGAM subfamily.

The catalysed reaction is (2R)-2-phosphoglycerate = (2R)-3-phosphoglycerate. It functions in the pathway carbohydrate degradation; glycolysis; pyruvate from D-glyceraldehyde 3-phosphate: step 3/5. In terms of biological role, catalyzes the interconversion of 2-phosphoglycerate and 3-phosphoglycerate. The sequence is that of 2,3-bisphosphoglycerate-dependent phosphoglycerate mutase from Borreliella burgdorferi (strain ATCC 35210 / DSM 4680 / CIP 102532 / B31) (Borrelia burgdorferi).